Here is a 533-residue protein sequence, read N- to C-terminus: Methyl-accepting chemotaxis protein IV (533 aa).

The Cytoplasmic segment spans residues 1-6 (MFNRIR). The chain crosses the membrane as a helical span at residues 7–33 (ISTTLFLILILCGILQIGSNGMSFWAF). At 34–188 (RDDLQRLNQV…AQSQRNYQIS (155 aa)) the chain is on the periplasmic side. A helical membrane pass occupies residues 189-209 (ALVFISMIIVAAIYISSALWW). Residues 210 to 533 (TRKMIVQPLA…VQLQIAPVVS (324 aa)) lie on the Cytoplasmic side of the membrane. Positions 212–264 (KMIVQPLAIIGSHFDSIAAGNLARPIAVYGRNEITAIFASLKTMQQALRGTVS) constitute an HAMP domain. The Methyl-accepting transducer domain maps to 269–498 (GSQEMHIGIA…EAAVATEQLA (230 aa)). Residues glutamine 293, glutamine 300, and glutamine 307 each carry the glutamate methyl ester (Gln) modification. Glutamate 489 is modified (glutamate methyl ester (Glu)).

It belongs to the methyl-accepting chemotaxis (MCP) protein family.

The protein resides in the cell inner membrane. Mediates taxis toward dipeptides via an interaction with the periplasmic dipeptide-binding protein. In terms of biological role, chemotactic-signal transducers respond to changes in the concentration of attractants and repellents in the environment, transduce a signal from the outside to the inside of the cell, and facilitate sensory adaptation through the variation of the level of methylation. Attractants increase the level of methylation while repellents decrease the level of methylation, the methyl groups are added by the methyltransferase CheR and removed by the methylesterase CheB. This Escherichia coli (strain K12) protein is Methyl-accepting chemotaxis protein IV (tap).